Reading from the N-terminus, the 199-residue chain is 3-isopropylmalate dehydratase small subunit (199 aa).

The protein belongs to the LeuD family. LeuD type 1 subfamily. Heterodimer of LeuC and LeuD.

The enzyme catalyses (2R,3S)-3-isopropylmalate = (2S)-2-isopropylmalate. It participates in amino-acid biosynthesis; L-leucine biosynthesis; L-leucine from 3-methyl-2-oxobutanoate: step 2/4. Its function is as follows. Catalyzes the isomerization between 2-isopropylmalate and 3-isopropylmalate, via the formation of 2-isopropylmaleate. The chain is 3-isopropylmalate dehydratase small subunit from Tolumonas auensis (strain DSM 9187 / NBRC 110442 / TA 4).